The chain runs to 251 residues: Cell division protein ZapD (251 aa).

Belongs to the ZapD family. As to quaternary structure, interacts with FtsZ.

It localises to the cytoplasm. Cell division factor that enhances FtsZ-ring assembly. Directly interacts with FtsZ and promotes bundling of FtsZ protofilaments, with a reduction in FtsZ GTPase activity. This Burkholderia vietnamiensis (strain G4 / LMG 22486) (Burkholderia cepacia (strain R1808)) protein is Cell division protein ZapD.